Consider the following 353-residue polypeptide: Photosystem II D2 protein (353 aa).

The residue at position 2 (Thr-2) is an N-acetylthreonine. Thr-2 carries the phosphothreonine modification. A helical membrane pass occupies residues 41-61 (CAYFALGGWFTGTTFVTSWYT). His-118 is a chlorophyll a binding site. The helical transmembrane segment at 125 to 141 (GFMLRQFEIARSVQLRP) threads the bilayer. The pheophytin a site is built by Gln-130 and Asn-143. The chain crosses the membrane as a helical span at residues 153–166 (VFVSVFLIYPLGQS). His-198 is a chlorophyll a binding site. Residues 208–228 (AALLCAIHGATVENTLFEDGD) form a helical membrane-spanning segment. The a plastoquinone site is built by His-215 and Phe-262. His-215 contacts Fe cation. His-269 is a binding site for Fe cation. A helical transmembrane segment spans residues 279 to 295 (GLWMSALGVVGLALNLR).

It belongs to the reaction center PufL/M/PsbA/D family. PSII is composed of 1 copy each of membrane proteins PsbA, PsbB, PsbC, PsbD, PsbE, PsbF, PsbH, PsbI, PsbJ, PsbK, PsbL, PsbM, PsbT, PsbX, PsbY, PsbZ, Psb30/Ycf12, at least 3 peripheral proteins of the oxygen-evolving complex and a large number of cofactors. It forms dimeric complexes. The D1/D2 heterodimer binds P680, chlorophylls that are the primary electron donor of PSII, and subsequent electron acceptors. It shares a non-heme iron and each subunit binds pheophytin, quinone, additional chlorophylls, carotenoids and lipids. There is also a Cl(-1) ion associated with D1 and D2, which is required for oxygen evolution. The PSII complex binds additional chlorophylls, carotenoids and specific lipids. is required as a cofactor.

Its subcellular location is the plastid. It localises to the chloroplast thylakoid membrane. The enzyme catalyses 2 a plastoquinone + 4 hnu + 2 H2O = 2 a plastoquinol + O2. Photosystem II (PSII) is a light-driven water:plastoquinone oxidoreductase that uses light energy to abstract electrons from H(2)O, generating O(2) and a proton gradient subsequently used for ATP formation. It consists of a core antenna complex that captures photons, and an electron transfer chain that converts photonic excitation into a charge separation. The D1/D2 (PsbA/PsbD) reaction center heterodimer binds P680, the primary electron donor of PSII as well as several subsequent electron acceptors. D2 is needed for assembly of a stable PSII complex. This is Photosystem II D2 protein from Oenothera argillicola (Appalachian evening primrose).